A 126-amino-acid polypeptide reads, in one-letter code: 3-isopropylmalate dehydrogenase (126 aa).

Residues aspartate 14 and aspartate 18 each coordinate Mg(2+). Residue 48-60 (GSAPDIAGKNIAN) coordinates NAD(+).

The protein belongs to the isocitrate and isopropylmalate dehydrogenases family. LeuB type 1 subfamily. As to quaternary structure, homodimer. Requires Mg(2+) as cofactor. Mn(2+) is required as a cofactor.

It is found in the cytoplasm. The catalysed reaction is (2R,3S)-3-isopropylmalate + NAD(+) = 4-methyl-2-oxopentanoate + CO2 + NADH. It participates in amino-acid biosynthesis; L-leucine biosynthesis; L-leucine from 3-methyl-2-oxobutanoate: step 3/4. In terms of biological role, catalyzes the oxidation of 3-carboxy-2-hydroxy-4-methylpentanoate (3-isopropylmalate) to 3-carboxy-4-methyl-2-oxopentanoate. The product decarboxylates to 4-methyl-2 oxopentanoate. This Buchnera aphidicola subsp. Uroleucon rurale protein is 3-isopropylmalate dehydrogenase (leuB).